An 82-amino-acid chain; its full sequence is T-complex protein 1 subunit gamma (82 aa).

G15 serves as a coordination point for ADP. An ATP-binding site is contributed by G15. D66 provides a ligand contact to Mg(2+). G67, T68, T69, and S70 together coordinate ADP. G67, T68, and T69 together coordinate ATP.

Belongs to the TCP-1 chaperonin family. As to quaternary structure, component of the chaperonin-containing T-complex (TRiC), a hexadecamer composed of two identical back-to-back stacked rings enclosing a protein folding chamber. Each ring is made up of eight different subunits: TCP1/CCT1, CCT2, CCT3, CCT4, CCT5, CCT6A/CCT6, CCT7, CCT8. Interacts with PACRG. Interacts with DNAAF4. Interacts with DLEC1.

Its subcellular location is the cytoplasm. It carries out the reaction ATP + H2O = ADP + phosphate + H(+). In terms of biological role, component of the chaperonin-containing T-complex (TRiC), a molecular chaperone complex that assists the folding of actin, tubulin and other proteins upon ATP hydrolysis. The TRiC complex mediates the folding of WRAP53/TCAB1, thereby regulating telomere maintenance. As part of the TRiC complex may play a role in the assembly of BBSome, a complex involved in ciliogenesis regulating transports vesicles to the cilia. This chain is T-complex protein 1 subunit gamma (CCT3), found in Sus scrofa (Pig).